The chain runs to 141 residues: Hemoglobin subunit alpha-1 (141 aa).

A Globin domain is found at 1 to 141 (VLTDEDKARV…LSKDLVSKYR (141 aa)). Residue H58 participates in O2 binding. H87 is a binding site for heme b.

This sequence belongs to the globin family. As to quaternary structure, heterotetramer of two alpha chains and two beta chains. Red blood cells.

Functionally, involved in oxygen transport from the lung to the various peripheral tissues. This Naja naja (Indian cobra) protein is Hemoglobin subunit alpha-1.